We begin with the raw amino-acid sequence, 478 residues long: Probable glucan endo-1,3-beta-glucosidase A6 (478 aa).

The signal sequence occupies residues 1–20 (MSLLAFFLFTILVFSSSCCS). The active-site Proton donor is the Glu135. Glu280 acts as the Nucleophile in catalysis. An intrachain disulfide couples Cys390 to Cys453.

The protein belongs to the glycosyl hydrolase 17 family. Contains two additional disulfide bonds, but it is unclear if they are between the pairs Cys-409-Cys-416 and Cys-425-Cys-471 or between the pairs Cys-409-Cys-471 and Cys-416-Cys-425. In terms of tissue distribution, anthers.

The enzyme catalyses Hydrolysis of (1-&gt;3)-beta-D-glucosidic linkages in (1-&gt;3)-beta-D-glucans.. In terms of biological role, probable beta-1,3-glucanase that may be involved in the degradation of callose walls around the microspore tetrad during pollen development. May be required for pollen exine formation. The chain is Probable glucan endo-1,3-beta-glucosidase A6 from Arabidopsis thaliana (Mouse-ear cress).